Reading from the N-terminus, the 228-residue chain is Isoprenyl transferase (228 aa).

Asp-15 is an active-site residue. Mg(2+) is bound at residue Asp-15. Substrate contacts are provided by residues 16-19 (GNGR), Trp-20, Arg-28, His-32, and 60-62 (STE). Catalysis depends on Asn-63, which acts as the Proton acceptor. Substrate is bound by residues Trp-64, Arg-66, Arg-176, and 182–184 (RLS). Glu-195 is a binding site for Mg(2+).

This sequence belongs to the UPP synthase family. In terms of assembly, homodimer. Mg(2+) serves as cofactor.

In terms of biological role, catalyzes the condensation of isopentenyl diphosphate (IPP) with allylic pyrophosphates generating different type of terpenoids. The protein is Isoprenyl transferase of Wolinella succinogenes (strain ATCC 29543 / DSM 1740 / CCUG 13145 / JCM 31913 / LMG 7466 / NCTC 11488 / FDC 602W) (Vibrio succinogenes).